A 326-amino-acid polypeptide reads, in one-letter code: MATH domain and coiled-coil domain-containing protein At3g58370 (326 aa).

The region spanning aspartate 7–isoleucine 133 is the MATH domain. Residues leucine 259–aspartate 312 adopt a coiled-coil conformation.

This chain is MATH domain and coiled-coil domain-containing protein At3g58370, found in Arabidopsis thaliana (Mouse-ear cress).